The sequence spans 407 residues: 1-deoxy-D-xylulose 5-phosphate reductoisomerase (407 aa).

Thr25, Gly26, Ser27, Ile28, Asn53, and Asn136 together coordinate NADPH. Lys137 serves as a coordination point for 1-deoxy-D-xylulose 5-phosphate. An NADPH-binding site is contributed by Glu138. Position 162 (Asp162) interacts with Mn(2+). 1-deoxy-D-xylulose 5-phosphate contacts are provided by Ser163, Glu164, Ser188, and His211. A Mn(2+)-binding site is contributed by Glu164. Gly217 lines the NADPH pocket. The 1-deoxy-D-xylulose 5-phosphate site is built by Ser224, Asn229, Lys230, and Glu233. Residue Glu233 coordinates Mn(2+).

It belongs to the DXR family. Requires Mg(2+) as cofactor. Mn(2+) is required as a cofactor.

The catalysed reaction is 2-C-methyl-D-erythritol 4-phosphate + NADP(+) = 1-deoxy-D-xylulose 5-phosphate + NADPH + H(+). The protein operates within isoprenoid biosynthesis; isopentenyl diphosphate biosynthesis via DXP pathway; isopentenyl diphosphate from 1-deoxy-D-xylulose 5-phosphate: step 1/6. Catalyzes the NADPH-dependent rearrangement and reduction of 1-deoxy-D-xylulose-5-phosphate (DXP) to 2-C-methyl-D-erythritol 4-phosphate (MEP). This chain is 1-deoxy-D-xylulose 5-phosphate reductoisomerase, found in Bradyrhizobium sp. (strain ORS 278).